The sequence spans 419 residues: Tyrosine--tRNA ligase (419 aa).

Residue Tyr34 participates in L-tyrosine binding. A 'HIGH' region motif is present at residues 39 to 48 (PTADSLHLGH). Positions 169 and 173 each coordinate L-tyrosine. A 'KMSKS' region motif is present at residues 229-233 (KFGKS). ATP is bound at residue Lys232. Positions 352-419 (LNIIDLLVTS…KKKYFVLNFK (68 aa)) constitute an S4 RNA-binding domain.

Belongs to the class-I aminoacyl-tRNA synthetase family. TyrS type 1 subfamily. As to quaternary structure, homodimer.

The protein resides in the cytoplasm. It catalyses the reaction tRNA(Tyr) + L-tyrosine + ATP = L-tyrosyl-tRNA(Tyr) + AMP + diphosphate + H(+). Catalyzes the attachment of tyrosine to tRNA(Tyr) in a two-step reaction: tyrosine is first activated by ATP to form Tyr-AMP and then transferred to the acceptor end of tRNA(Tyr). The protein is Tyrosine--tRNA ligase of Streptococcus agalactiae serotype V (strain ATCC BAA-611 / 2603 V/R).